Here is a 622-residue protein sequence, read N- to C-terminus: Phosphoribomutase (622 aa).

Substrate is bound by residues Thr-57, Arg-61, 158 to 159 (SH), and Lys-168. The active-site Phosphoserine intermediate is the Ser-158. Ser-158 is a Mg(2+) binding site. The residue at position 158 (Ser-158) is a Phosphoserine. Mg(2+)-binding residues include Asp-325, Asp-327, and Asp-329. Substrate is bound by residues 329–330 (DR), Thr-404, 428–430 (EEA), and Lys-442.

The protein belongs to the phosphohexose mutase family. Mg(2+) serves as cofactor.

The protein resides in the cytoplasm. The protein localises to the nucleus. The enzyme catalyses alpha-D-ribose 1-phosphate = D-ribose 5-phosphate. Functionally, major phosphoribomutase that converts ribose 1-phosphate to ribose 5-phosphate. Involved in ribose salvage via the pentose phosphate pathway. This Saccharomyces cerevisiae (strain ATCC 204508 / S288c) (Baker's yeast) protein is Phosphoribomutase.